Reading from the N-terminus, the 279-residue chain is MADDLGDEWWENQPTGAGSSPEASDGEGEGDTEVMQQETVPVPVPSEKTKQPKECFLIQPKERKENTTKTRKRRKKKITDVLAKSEPKPGLPEDLQKLMKDYYSSRRLVIELEELNLPDSCFLKANDLTHSLSSYLKEICPKWVKLRKNHSEKKSVLMLIICSSAVRALELIRSMTAFRGDGKVIKLFAKHIKVQAQVKLLEKRVVHLGVGTPGRIKELVKQGGLNLSPLKFLVFDWNWRDQKLRRMMDIPEIRKEVFELLEMGVLSLCKSESLKLGLF.

Over residues 1–10 (MADDLGDEWW) the composition is skewed to acidic residues. The segment at 1 to 89 (MADDLGDEWW…DVLAKSEPKP (89 aa)) is disordered. Positions 12–22 (NQPTGAGSSPE) are enriched in polar residues. Phosphoserine occurs at positions 19 and 24. The residue at position 167 (arginine 167) is an Omega-N-methylarginine. Threonine 212 carries the post-translational modification Phosphothreonine.

It belongs to the CMS1 family.

This is Protein CMSS1 (CMSS1) from Homo sapiens (Human).